Reading from the N-terminus, the 74-residue chain is Protein SspS (74 aa).

Belongs to the alpha/beta-type SASP family.

In Streptococcus pyogenes, this protein is Protein SspS (sspS).